The primary structure comprises 111 residues: Transcription initiation factor IIA subunit 2 (111 aa).

It belongs to the TFIIA subunit 2 family. As to quaternary structure, TFIIA is a heterodimer of the large unprocessed subunit 1 and a small subunit gamma. It was originally believed to be a heterotrimer of an alpha, a beta and a gamma subunit. Interacts with NCOA6 general coactivator. TFIIA forms a complex with TBP.

The protein localises to the nucleus. Functionally, TFIIA is a component of the transcription machinery of RNA polymerase II and plays an important role in transcriptional activation. TFIIA in a complex with TBP mediates transcriptional activity. The sequence is that of Transcription initiation factor IIA subunit 2 (gtf2a2) from Paralichthys olivaceus (Bastard halibut).